The sequence spans 363 residues: S-adenosylmethionine:tRNA ribosyltransferase-isomerase (363 aa).

This sequence belongs to the QueA family. In terms of assembly, monomer.

Its subcellular location is the cytoplasm. It carries out the reaction 7-aminomethyl-7-carbaguanosine(34) in tRNA + S-adenosyl-L-methionine = epoxyqueuosine(34) in tRNA + adenine + L-methionine + 2 H(+). The protein operates within tRNA modification; tRNA-queuosine biosynthesis. Functionally, transfers and isomerizes the ribose moiety from AdoMet to the 7-aminomethyl group of 7-deazaguanine (preQ1-tRNA) to give epoxyqueuosine (oQ-tRNA). The protein is S-adenosylmethionine:tRNA ribosyltransferase-isomerase of Haemophilus influenzae (strain PittEE).